The sequence spans 252 residues: Imidazole glycerol phosphate synthase subunit HisF (252 aa).

Catalysis depends on residues aspartate 11 and aspartate 130.

Belongs to the HisA/HisF family. Heterodimer of HisH and HisF.

Its subcellular location is the cytoplasm. It carries out the reaction 5-[(5-phospho-1-deoxy-D-ribulos-1-ylimino)methylamino]-1-(5-phospho-beta-D-ribosyl)imidazole-4-carboxamide + L-glutamine = D-erythro-1-(imidazol-4-yl)glycerol 3-phosphate + 5-amino-1-(5-phospho-beta-D-ribosyl)imidazole-4-carboxamide + L-glutamate + H(+). Its pathway is amino-acid biosynthesis; L-histidine biosynthesis; L-histidine from 5-phospho-alpha-D-ribose 1-diphosphate: step 5/9. Functionally, IGPS catalyzes the conversion of PRFAR and glutamine to IGP, AICAR and glutamate. The HisF subunit catalyzes the cyclization activity that produces IGP and AICAR from PRFAR using the ammonia provided by the HisH subunit. The sequence is that of Imidazole glycerol phosphate synthase subunit HisF from Geobacillus kaustophilus (strain HTA426).